Reading from the N-terminus, the 287-residue chain is uncharacterized protein (287 aa).

The interval 1 to 23 (MTVSDSPAQRQTPPQTPGGTAPR) is disordered. Low complexity predominate over residues 7 to 23 (PAQRQTPPQTPGGTAPR). Residues D31, D33, and D204 each coordinate Mg(2+).

This sequence belongs to the HAD-like hydrolase superfamily. SerB family.

This is an uncharacterized protein from Mycobacterium tuberculosis (strain CDC 1551 / Oshkosh).